Here is a 222-residue protein sequence, read N- to C-terminus: Pro-opiomelanocortin-1 (222 aa).

A signal peptide spans 1–28 (MVRGERMLCPAWLLALAVLCAAGSEVRA). Residues 29 to 105 (QCMEDARCRD…DPESSPQHEH (77 aa)) constitute a propeptide that is removed on maturation.

It belongs to the POMC family. Post-translationally, specific enzymatic cleavages at paired basic residues yield the different active peptides.

The protein resides in the secreted. In terms of biological role, stimulates the adrenal glands to release cortisol. Functionally, anorexigenic peptide. Increases the pigmentation of skin by increasing melanin production in melanocytes. Its function is as follows. Increases the pigmentation of skin by increasing melanin production in melanocytes. Endogenous orexigenic opiate. In terms of biological role, endogenous opiate. This chain is Pro-opiomelanocortin-1 (pomca), found in Cyprinus carpio (Common carp).